Reading from the N-terminus, the 185-residue chain is Ubiquitin-conjugating enzyme E2 2 (185 aa).

Residues 4 to 150 (PSKKRLIRDF…VKATVEASWL (147 aa)) form the UBC core domain. The Glycyl thioester intermediate role is filled by Cys88. Acidic residues predominate over residues 149–173 (WLDDGEMPESIEEDDEAEAEAEAEA). Residues 149–185 (WLDDGEMPESIEEDDEAEAEAEAEATVDRSAPQTASA) are disordered.

It belongs to the ubiquitin-conjugating enzyme family.

Its subcellular location is the cytoplasm. The protein localises to the nucleus. The enzyme catalyses S-ubiquitinyl-[E1 ubiquitin-activating enzyme]-L-cysteine + [E2 ubiquitin-conjugating enzyme]-L-cysteine = [E1 ubiquitin-activating enzyme]-L-cysteine + S-ubiquitinyl-[E2 ubiquitin-conjugating enzyme]-L-cysteine.. Its pathway is protein modification; protein ubiquitination. In terms of biological role, catalyzes the covalent attachment of ubiquitin to other proteins. Plays a role in transcription regulation by catalyzing the monoubiquitination of histone H2B to form H2BK123ub1. H2BK123ub1 gives a specific tag for epigenetic transcriptional activation and is also a prerequisite for H3K4me and H3K79me formation. Also involved in postreplication repair of UV-damaged DNA, in N-end rule-dependent protein degradation and in sporulation. This is Ubiquitin-conjugating enzyme E2 2 (UBC2) from Mycosarcoma maydis (Corn smut fungus).